The chain runs to 995 residues: UPF0182 protein NFA_45260 (995 aa).

Transmembrane regions (helical) follow at residues Val18–Asp38, Ile63–Leu83, Phe115–Trp135, Phe176–Leu196, Ile211–Asp231, Lys260–Leu280, and Met288–Val308. The tract at residues Ala904 to Leu957 is disordered. Low complexity-rich tracts occupy residues Thr927 to Pro938 and Gly946 to Ala955.

It belongs to the UPF0182 family.

Its subcellular location is the cell membrane. The sequence is that of UPF0182 protein NFA_45260 from Nocardia farcinica (strain IFM 10152).